The following is a 430-amino-acid chain: Adenylosuccinate synthetase (430 aa).

GTP contacts are provided by residues 12-18 (GDEGKGK) and 40-42 (GHT). The active-site Proton acceptor is the D13. Mg(2+) is bound by residues D13 and G40. IMP contacts are provided by residues 13–16 (DEGK), 38–41 (NAGH), T130, R144, Q224, T239, and R303. The Proton donor role is filled by H41. Substrate is bound at residue 299–305 (TVTGRKR). GTP contacts are provided by residues R305, 331–333 (KLD), and 413–415 (STS).

This sequence belongs to the adenylosuccinate synthetase family. Homodimer. Requires Mg(2+) as cofactor.

Its subcellular location is the cytoplasm. It carries out the reaction IMP + L-aspartate + GTP = N(6)-(1,2-dicarboxyethyl)-AMP + GDP + phosphate + 2 H(+). Its pathway is purine metabolism; AMP biosynthesis via de novo pathway; AMP from IMP: step 1/2. In terms of biological role, plays an important role in the de novo pathway of purine nucleotide biosynthesis. Catalyzes the first committed step in the biosynthesis of AMP from IMP. This is Adenylosuccinate synthetase from Parvibaculum lavamentivorans (strain DS-1 / DSM 13023 / NCIMB 13966).